Here is a 149-residue protein sequence, read N- to C-terminus: Low molecular weight protein-tyrosine-phosphatase Wzb (149 aa).

The active-site Nucleophile is C9. R15 is an active-site residue. Catalysis depends on D115, which acts as the Proton donor.

The protein belongs to the low molecular weight phosphotyrosine protein phosphatase family.

The enzyme catalyses O-phospho-L-tyrosyl-[protein] + H2O = L-tyrosyl-[protein] + phosphate. It functions in the pathway glycan metabolism; exopolysaccharide biosynthesis. Its function is as follows. Dephosphorylates Wzc. Required for the extracellular polysaccharide colanic acid synthesis. Probably involved in the export of colanic acid from the cell to medium. Involved in protection of cells against contact-dependent growth inhibition (CDI). This Salmonella typhi protein is Low molecular weight protein-tyrosine-phosphatase Wzb (wzb).